A 128-amino-acid polypeptide reads, in one-letter code: Small ribosomal subunit protein uS11 (128 aa).

This sequence belongs to the universal ribosomal protein uS11 family. In terms of assembly, part of the 30S ribosomal subunit. Interacts with proteins S7 and S18. Binds to IF-3.

In terms of biological role, located on the platform of the 30S subunit, it bridges several disparate RNA helices of the 16S rRNA. Forms part of the Shine-Dalgarno cleft in the 70S ribosome. The sequence is that of Small ribosomal subunit protein uS11 from Solidesulfovibrio magneticus (strain ATCC 700980 / DSM 13731 / RS-1) (Desulfovibrio magneticus).